Here is a 376-residue protein sequence, read N- to C-terminus: Cellular tumor antigen p53 (376 aa).

Residues 1–36 (MEGNGERDTMMVEPPDSQEFAELWLRNLIVRDNSLW) form a transcription activation (acidic) region. Residues 77–268 (DYPGLLNFTL…KTEESNFKKQ (192 aa)) mediate DNA binding. Residues 150–159 (RCPHHERSND) are compositionally biased toward basic and acidic residues. The disordered stretch occupies residues 150 to 171 (RCPHHERSNDSSDGPAPPGHLL). The Zn(2+) site is built by C151, H154, C214, and C218. Residues 249–256 (RVCACPGR) are interaction with DNA. Basic and acidic residues-rich tracts occupy residues 257–270 (DRKT…KQQE) and 282–294 (SMKD…EASK). Residues 257 to 306 (DRKTEESNFKKQQEPKTSGKTLTKRSMKDPPSHPEASKKSKNSSSDDEIY) are disordered. The short motif at 280 to 297 (KRSMKDPPSHPEASKKSK) is the Bipartite nuclear localization signal element. The tract at residues 303 to 334 (DEIYTLQVRGKERYEFLKKINDGLELSDVVPP) is oligomerization. A Nuclear export signal motif is present at residues 317-328 (EFLKKINDGLEL). The segment at 342-376 (QKLLSKTCRKERDGAAGEPKRGKKRLVKEEKCDSD) is disordered. The segment at 347-372 (KTCRKERDGAAGEPKRGKKRLVKEEK) is basic (repression of DNA-binding). Basic and acidic residues predominate over residues 349–361 (CRKERDGAAGEPK).

This sequence belongs to the p53 family. As to quaternary structure, binds DNA as a homotetramer. The cofactor is Zn(2+).

It localises to the cytoplasm. The protein resides in the nucleus. In terms of biological role, multifunctional transcription factor that induces cell cycle arrest, DNA repair or apoptosis upon binding to its target DNA sequence. Acts as a tumor suppressor in many tumor types; induces growth arrest or apoptosis depending on the physiological circumstances and cell type. Negatively regulates cell division by controlling expression of a set of genes required for this process. One of the activated genes is an inhibitor of cyclin-dependent kinases. Apoptosis induction seems to be mediated either by stimulation of BAX and FAS antigen expression, or by repression of Bcl-2 expression. The polypeptide is Cellular tumor antigen p53 (tp53) (Ictalurus punctatus (Channel catfish)).